The sequence spans 475 residues: MESTTEVELSRLPDSLRGRILVTGAGVSGTGIAGMLHDLGLDVVVAEDNETSRHRLIELLDVDVVGTEHARASLGDYSIVVTSPGWRPDSPVLVDAASRGLEVIGDVELAWRLDRAGVFGVSRTWLAVTGTNGKTTTTAMLAAMMKQGGFNAVAVGNIGVPVSAALTSCDRVDVMVAELSSFQLHWAPTLVPDAGLVLNLAEDHIDWHGSFRDYALAKTRVLTAPVAVIGADDSYLVELTTELGLSGLIGFTLGEPGPRQLGVLNGHLVDNAFAAQLPLAPADGINPSGPAGVLDALAAAAVARSQGVSAEDIAGALATFEVSGHRGQVVAEDHGVQFIDNSKATNPHAADTALAGRESVIWIVGGQLKGADISELVATHAHRIKAALVLGADRAEIVTAVEQHAPDAMIRVTDSTDPVAAMRELVDHAFRFAEPGDCVLLAPAAASLDMYKGMGQRGDIFAEAVLSTIEGQKEK.

Residue G130 to T136 participates in ATP binding.

It belongs to the MurCDEF family.

It localises to the cytoplasm. It catalyses the reaction UDP-N-acetyl-alpha-D-muramoyl-L-alanine + D-glutamate + ATP = UDP-N-acetyl-alpha-D-muramoyl-L-alanyl-D-glutamate + ADP + phosphate + H(+). It functions in the pathway cell wall biogenesis; peptidoglycan biosynthesis. Its function is as follows. Cell wall formation. Catalyzes the addition of glutamate to the nucleotide precursor UDP-N-acetylmuramoyl-L-alanine (UMA). The polypeptide is UDP-N-acetylmuramoylalanine--D-glutamate ligase (Corynebacterium efficiens (strain DSM 44549 / YS-314 / AJ 12310 / JCM 11189 / NBRC 100395)).